We begin with the raw amino-acid sequence, 270 residues long: Probable septum site-determining protein MinC (270 aa).

Positions 105-129 (DRRAPSSKAADEAPVQQAEPAAPAA) are disordered. Over residues 116–129 (EAPVQQAEPAAPAA) the composition is skewed to low complexity.

Belongs to the MinC family. Interacts with MinD and FtsZ.

In terms of biological role, cell division inhibitor that blocks the formation of polar Z ring septums. Rapidly oscillates between the poles of the cell to destabilize FtsZ filaments that have formed before they mature into polar Z rings. Prevents FtsZ polymerization. This is Probable septum site-determining protein MinC from Burkholderia mallei (strain NCTC 10247).